We begin with the raw amino-acid sequence, 349 residues long: Protein RecA (349 aa).

65–72 contributes to the ATP binding site; it reads GPESSGKT. The tract at residues 329–349 is disordered; it reads FDGDVDENENEDDSPKTLFDE. A compositionally biased stretch (acidic residues) spans 331–340; that stretch reads GDVDENENED.

This sequence belongs to the RecA family.

It localises to the cytoplasm. In terms of biological role, can catalyze the hydrolysis of ATP in the presence of single-stranded DNA, the ATP-dependent uptake of single-stranded DNA by duplex DNA, and the ATP-dependent hybridization of homologous single-stranded DNAs. It interacts with LexA causing its activation and leading to its autocatalytic cleavage. The chain is Protein RecA from Staphylococcus epidermidis (strain ATCC 35984 / DSM 28319 / BCRC 17069 / CCUG 31568 / BM 3577 / RP62A).